We begin with the raw amino-acid sequence, 649 residues long: Serine/threonine kinase-like domain-containing protein STKLD1 (649 aa).

The span at 1-13 (MLGPESDGRRPTQ) shows a compositional bias: basic and acidic residues. A disordered region spans residues 1-23 (MLGPESDGRRPTQGERGPGYPGE). In terms of domain architecture, Protein kinase spans 28–379 (YQVLYQLNPG…CNQAITSAVL (352 aa)). ATP-binding positions include 34 to 42 (LNPGALGVN) and Lys-57. A disordered region spans residues 621 to 640 (FSKPGLPPGGSPQPGCTASG).

It belongs to the protein kinase superfamily. Ser/Thr protein kinase family. STKL subfamily.

The chain is Serine/threonine kinase-like domain-containing protein STKLD1 (STKLD1) from Macaca fascicularis (Crab-eating macaque).